Reading from the N-terminus, the 290-residue chain is 4-hydroxybenzoate octaprenyltransferase (290 aa).

8 helical membrane-spanning segments follow: residues 23-43 (IGAL…TPGM), 46-66 (LWIL…GCVV), 99-119 (LFVV…AMTI), 141-161 (LPQV…FAAV), 163-183 (ESLP…AVAY), 212-232 (TLII…IGWL), 233-253 (NGLG…FVYQ), and 268-288 (AFMN…MSYW).

This sequence belongs to the UbiA prenyltransferase family. Requires Mg(2+) as cofactor.

Its subcellular location is the cell inner membrane. The enzyme catalyses all-trans-octaprenyl diphosphate + 4-hydroxybenzoate = 4-hydroxy-3-(all-trans-octaprenyl)benzoate + diphosphate. Its pathway is cofactor biosynthesis; ubiquinone biosynthesis. Catalyzes the prenylation of para-hydroxybenzoate (PHB) with an all-trans polyprenyl group. Mediates the second step in the final reaction sequence of ubiquinone-8 (UQ-8) biosynthesis, which is the condensation of the polyisoprenoid side chain with PHB, generating the first membrane-bound Q intermediate 3-octaprenyl-4-hydroxybenzoate. The sequence is that of 4-hydroxybenzoate octaprenyltransferase from Salmonella typhi.